Reading from the N-terminus, the 184-residue chain is Large ribosomal subunit protein uL18 (184 aa).

The protein belongs to the universal ribosomal protein uL18 family. In terms of assembly, part of the 50S ribosomal subunit. Contacts the 5S and 23S rRNAs.

Functionally, this is one of the proteins that bind and probably mediate the attachment of the 5S RNA into the large ribosomal subunit, where it forms part of the central protuberance. This Haloferax mediterranei (strain ATCC 33500 / DSM 1411 / JCM 8866 / NBRC 14739 / NCIMB 2177 / R-4) (Halobacterium mediterranei) protein is Large ribosomal subunit protein uL18.